A 156-amino-acid polypeptide reads, in one-letter code: Small ribosomal subunit protein uS7 (156 aa).

The protein belongs to the universal ribosomal protein uS7 family. In terms of assembly, part of the 30S ribosomal subunit. Contacts proteins S9 and S11.

In terms of biological role, one of the primary rRNA binding proteins, it binds directly to 16S rRNA where it nucleates assembly of the head domain of the 30S subunit. Is located at the subunit interface close to the decoding center, probably blocks exit of the E-site tRNA. This chain is Small ribosomal subunit protein uS7, found in Deinococcus geothermalis (strain DSM 11300 / CIP 105573 / AG-3a).